The primary structure comprises 221 residues: UPF0758 protein PC1_4100 (221 aa).

Residues 99–221 form the MPN domain; it reads AMLNPQATGQ…YVSFAERGWI (123 aa). His170, His172, and Asp183 together coordinate Zn(2+). The JAMM motif motif lies at 170-183; sequence HNHPSGKAEPSQAD.

The protein belongs to the UPF0758 family. YicR subfamily.

The protein is UPF0758 protein PC1_4100 of Pectobacterium carotovorum subsp. carotovorum (strain PC1).